Reading from the N-terminus, the 94-residue chain is Mobilization protein C (94 aa).

Interacts with MobA and MobB to form the relaxosome.

Its function is as follows. This protein is essential to promote the specific transfer of the plasmid in the presence of conjugative plasmids. The protein is Mobilization protein C (mobC) of Escherichia coli.